We begin with the raw amino-acid sequence, 284 residues long: Bifunctional protein FolD (284 aa).

Residues G164 to S166 and S189 each bind NADP(+).

The protein belongs to the tetrahydrofolate dehydrogenase/cyclohydrolase family. As to quaternary structure, homodimer.

It catalyses the reaction (6R)-5,10-methylene-5,6,7,8-tetrahydrofolate + NADP(+) = (6R)-5,10-methenyltetrahydrofolate + NADPH. The catalysed reaction is (6R)-5,10-methenyltetrahydrofolate + H2O = (6R)-10-formyltetrahydrofolate + H(+). It participates in one-carbon metabolism; tetrahydrofolate interconversion. In terms of biological role, catalyzes the oxidation of 5,10-methylenetetrahydrofolate to 5,10-methenyltetrahydrofolate and then the hydrolysis of 5,10-methenyltetrahydrofolate to 10-formyltetrahydrofolate. The protein is Bifunctional protein FolD of Listeria monocytogenes serovar 1/2a (strain ATCC BAA-679 / EGD-e).